We begin with the raw amino-acid sequence, 65 residues long: Large ribosomal subunit protein uL30 (65 aa).

This sequence belongs to the universal ribosomal protein uL30 family. In terms of assembly, part of the 50S ribosomal subunit.

The protein is Large ribosomal subunit protein uL30 of Rickettsia bellii (strain OSU 85-389).